Reading from the N-terminus, the 853-residue chain is Putative dipeptidyl aminopeptidase C14C4.15c (853 aa).

A disordered region spans residues 1 to 26 (MNAYEGDTLNNHGKSSTRQHWRKRSA). Over 1-65 (MNAYEGDTLN…AKKRRRKKHR (65 aa)) the chain is Cytoplasmic. A compositionally biased stretch (basic residues) spans 15–25 (SSTRQHWRKRS). A helical; Signal-anchor for type II membrane protein membrane pass occupies residues 66–86 (YIYLAVCLFFLASVLSCAIIF). Residues 87 to 853 (RFYLHTNREN…SGHFHHALYC (767 aa)) lie on the Lumenal side of the membrane. N-linked (GlcNAc...) asparagine glycans are attached at residues N96, N102, N472, N483, and N613. Residues S719, D795, and H828 each act as charge relay system in the active site.

The protein belongs to the peptidase S9B family.

Its subcellular location is the vacuole membrane. The polypeptide is Putative dipeptidyl aminopeptidase C14C4.15c (Schizosaccharomyces pombe (strain 972 / ATCC 24843) (Fission yeast)).